A 479-amino-acid chain; its full sequence is Cell division protein FtsA (479 aa).

Residues 417–458 (QGRQTERKENEQRDNTDRQREDTPKQTVKKKEKTGPSFGDKL) form a disordered region. Basic and acidic residues predominate over residues 420-440 (QTERKENEQRDNTDRQREDTP).

Belongs to the FtsA/MreB family. As to quaternary structure, self-interacts. Interacts with FtsZ.

It is found in the cell inner membrane. Its function is as follows. Cell division protein that is involved in the assembly of the Z ring. May serve as a membrane anchor for the Z ring. This chain is Cell division protein FtsA, found in Porphyromonas gingivalis (strain ATCC BAA-308 / W83).